Consider the following 163-residue polypeptide: ATP synthase subunit b' (163 aa).

A helical membrane pass occupies residues 28–45; that stretch reads LMAIQFLLLALILNATLY.

Belongs to the ATPase B chain family. As to quaternary structure, F-type ATPases have 2 components, F(1) - the catalytic core - and F(0) - the membrane proton channel. F(1) has five subunits: alpha(3), beta(3), gamma(1), delta(1), epsilon(1). F(0) has four main subunits: a(1), b(1), b'(1) and c(10-14). The alpha and beta chains form an alternating ring which encloses part of the gamma chain. F(1) is attached to F(0) by a central stalk formed by the gamma and epsilon chains, while a peripheral stalk is formed by the delta, b and b' chains.

Its subcellular location is the cellular thylakoid membrane. Its function is as follows. F(1)F(0) ATP synthase produces ATP from ADP in the presence of a proton or sodium gradient. F-type ATPases consist of two structural domains, F(1) containing the extramembraneous catalytic core and F(0) containing the membrane proton channel, linked together by a central stalk and a peripheral stalk. During catalysis, ATP synthesis in the catalytic domain of F(1) is coupled via a rotary mechanism of the central stalk subunits to proton translocation. In terms of biological role, component of the F(0) channel, it forms part of the peripheral stalk, linking F(1) to F(0). The b'-subunit is a diverged and duplicated form of b found in plants and photosynthetic bacteria. This is ATP synthase subunit b' from Nostoc sp. (strain PCC 7120 / SAG 25.82 / UTEX 2576).